Here is a 357-residue protein sequence, read N- to C-terminus: 3-isopropylmalate dehydrogenase (357 aa).

76 to 89 (GPQWDTIDPALRPE) provides a ligand contact to NAD(+). Residues Arg-96, Arg-106, Arg-134, and Asp-224 each coordinate substrate. Mg(2+) is bound by residues Asp-224, Asp-248, and Asp-252. 282-294 (GSAPDIAGQGVAN) lines the NAD(+) pocket.

This sequence belongs to the isocitrate and isopropylmalate dehydrogenases family. LeuB type 1 subfamily. As to quaternary structure, homodimer. The cofactor is Mg(2+). Mn(2+) is required as a cofactor.

Its subcellular location is the cytoplasm. It carries out the reaction (2R,3S)-3-isopropylmalate + NAD(+) = 4-methyl-2-oxopentanoate + CO2 + NADH. It participates in amino-acid biosynthesis; L-leucine biosynthesis; L-leucine from 3-methyl-2-oxobutanoate: step 3/4. Functionally, catalyzes the oxidation of 3-carboxy-2-hydroxy-4-methylpentanoate (3-isopropylmalate) to 3-carboxy-4-methyl-2-oxopentanoate. The product decarboxylates to 4-methyl-2 oxopentanoate. The chain is 3-isopropylmalate dehydrogenase from Xylella fastidiosa (strain 9a5c).